The chain runs to 82 residues: Delta-actitoxin-Aeq2a (82 aa).

The first 19 residues, 1–19 (MNRLMILVFAAVFLALASA), serve as a signal peptide directing secretion. A propeptide spanning residues 20–26 (DEDVDIA) is cleaved from the precursor. 3 disulfide bridges follow: Cys32–Cys79, Cys34–Cys69, and Cys62–Cys80.

The protein belongs to the sea anemone sodium channel inhibitory toxin family. Type I subfamily.

The protein localises to the secreted. It localises to the nematocyst. In terms of biological role, binds specifically to voltage-gated sodium channels (Nav), thereby delaying their inactivation during signal transduction. Causes death to crabs (minimum lethal dose of 25 ug/kg) and mice. The polypeptide is Delta-actitoxin-Aeq2a (Actinia equina (Beadlet anemone)).